The primary structure comprises 283 residues: Thymidylate synthase (283 aa).

R22 contacts dUMP. The Nucleophile role is filled by C160. Residues 180–183 (RSCD), N191, and 221–223 (HIY) contribute to the dUMP site. D183 provides a ligand contact to (6R)-5,10-methylene-5,6,7,8-tetrahydrofolate. Position 282 (S282) interacts with (6R)-5,10-methylene-5,6,7,8-tetrahydrofolate.

The protein belongs to the thymidylate synthase family. Bacterial-type ThyA subfamily. Homodimer.

The protein localises to the cytoplasm. The enzyme catalyses dUMP + (6R)-5,10-methylene-5,6,7,8-tetrahydrofolate = 7,8-dihydrofolate + dTMP. It participates in pyrimidine metabolism; dTTP biosynthesis. Catalyzes the reductive methylation of 2'-deoxyuridine-5'-monophosphate (dUMP) to 2'-deoxythymidine-5'-monophosphate (dTMP) while utilizing 5,10-methylenetetrahydrofolate (mTHF) as the methyl donor and reductant in the reaction, yielding dihydrofolate (DHF) as a by-product. This enzymatic reaction provides an intracellular de novo source of dTMP, an essential precursor for DNA biosynthesis. The polypeptide is Thymidylate synthase (Shewanella loihica (strain ATCC BAA-1088 / PV-4)).